We begin with the raw amino-acid sequence, 216 residues long: Sarcospan (216 aa).

The Cytoplasmic segment spans residues 1 to 26 (MGRKPSPRAQELPEEEARTCCGCRFP). The chain crosses the membrane as a helical span at residues 27–47 (LLLALLQLALGIAVTVLGFLM). The Extracellular segment spans residues 48–59 (ASISPSLLVRDT). A helical transmembrane segment spans residues 60 to 80 (PFWAGSIVCVVAYLGLFMLCV). The Cytoplasmic portion of the chain corresponds to 81–95 (SYQVDERTCVQFSMK). The helical transmembrane segment at 96–116 (VFYFLLSALGLMVCMLAVAFA) threads the bilayer. The Extracellular segment spans residues 117 to 166 (AHHYSLLAQFTCETSLDSCQCKLPSSEPLSRAFVYRDVTDCTSVTGTFKL). Residues 167 to 187 (FLIIQMVLNLVCGLVCLLACF) traverse the membrane as a helical segment. The Cytoplasmic segment spans residues 188–216 (VMWKHRYQVFYVGVGLRSLMASDGQLPKA).

The protein localises to the cell membrane. It is found in the sarcolemma. It localises to the postsynaptic cell membrane. Component of the dystrophin-glycoprotein complex (DGC), a complex that spans the muscle plasma membrane and forms a link between the F-actin cytoskeleton and the extracellular matrix. Preferentially associates with the sarcoglycan subcomplex of the DGC. This Mus musculus (Mouse) protein is Sarcospan (Sspn).